Consider the following 317-residue polypeptide: Glycerol-3-phosphate dehydrogenase [NAD(P)+] (317 aa).

Residues Trp-20, Arg-40, Arg-41, and Lys-88 each contribute to the NADPH site. Residues Lys-88 and Gly-116 each contribute to the sn-glycerol 3-phosphate site. Ser-120 is an NADPH binding site. 5 residues coordinate sn-glycerol 3-phosphate: Lys-171, Asp-224, Ser-234, Arg-235, and Asn-236. Residue Lys-171 is the Proton acceptor of the active site. Arg-235 is an NADPH binding site. Glu-261 is an NADPH binding site.

The protein belongs to the NAD-dependent glycerol-3-phosphate dehydrogenase family.

It is found in the cytoplasm. The catalysed reaction is sn-glycerol 3-phosphate + NAD(+) = dihydroxyacetone phosphate + NADH + H(+). The enzyme catalyses sn-glycerol 3-phosphate + NADP(+) = dihydroxyacetone phosphate + NADPH + H(+). It participates in membrane lipid metabolism; glycerophospholipid metabolism. Catalyzes the reduction of the glycolytic intermediate dihydroxyacetone phosphate (DHAP) to sn-glycerol 3-phosphate (G3P), the key precursor for phospholipid synthesis. This chain is Glycerol-3-phosphate dehydrogenase [NAD(P)+], found in Synechocystis sp. (strain ATCC 27184 / PCC 6803 / Kazusa).